The primary structure comprises 110 residues: Thioredoxin (110 aa).

The Thioredoxin domain maps to 2–110 (SALLVEIDKD…IDAMIAKHVG (109 aa)). An intrachain disulfide couples cysteine 33 to cysteine 36.

The protein belongs to the thioredoxin family.

Functionally, participates in various redox reactions through the reversible oxidation of its active center dithiol to a disulfide and catalyzes dithiol-disulfide exchange reactions. In Peptoclostridium acidaminophilum (Eubacterium acidaminophilum), this protein is Thioredoxin (trxA).